We begin with the raw amino-acid sequence, 105 residues long: Urease subunit beta (105 aa).

Belongs to the urease beta subunit family. Heterotrimer of UreA (gamma), UreB (beta) and UreC (alpha) subunits. Three heterotrimers associate to form the active enzyme.

It localises to the cytoplasm. It catalyses the reaction urea + 2 H2O + H(+) = hydrogencarbonate + 2 NH4(+). It functions in the pathway nitrogen metabolism; urea degradation; CO(2) and NH(3) from urea (urease route): step 1/1. This chain is Urease subunit beta, found in Pseudomonas putida (strain ATCC 47054 / DSM 6125 / CFBP 8728 / NCIMB 11950 / KT2440).